The primary structure comprises 319 residues: Methionyl-tRNA formyltransferase (319 aa).

Residue 114 to 117 coordinates (6S)-5,6,7,8-tetrahydrofolate; that stretch reads SLLP.

It belongs to the Fmt family.

It carries out the reaction L-methionyl-tRNA(fMet) + (6R)-10-formyltetrahydrofolate = N-formyl-L-methionyl-tRNA(fMet) + (6S)-5,6,7,8-tetrahydrofolate + H(+). Functionally, attaches a formyl group to the free amino group of methionyl-tRNA(fMet). The formyl group appears to play a dual role in the initiator identity of N-formylmethionyl-tRNA by promoting its recognition by IF2 and preventing the misappropriation of this tRNA by the elongation apparatus. The polypeptide is Methionyl-tRNA formyltransferase (Acinetobacter baylyi (strain ATCC 33305 / BD413 / ADP1)).